The sequence spans 66 residues: Toxin Boma6e (66 aa).

The 63-residue stretch at 2–64 (RDAYIAQNYN…VPLKVQGKCH (63 aa)) folds into the LCN-type CS-alpha/beta domain. Cystine bridges form between cysteine 12–cysteine 63, cysteine 22–cysteine 46, and cysteine 26–cysteine 48.

The protein belongs to the long (3 C-C) scorpion toxin superfamily. In terms of processing, only three disulfide bridges can be formed, because only seven cysteines are present. In terms of tissue distribution, expressed by the venom gland.

It is found in the secreted. Binds voltage-independently at site-3 of sodium channels (Nav) and inhibits the inactivation of the activated channels, thereby blocking neuronal transmission. The sequence is that of Toxin Boma6e from Buthus occitanus mardochei (Moroccan scorpion).